Reading from the N-terminus, the 259-residue chain is Flap endonuclease Xni (259 aa).

Residue Asp-109 participates in Mg(2+) binding. One can recognise a 5'-3' exonuclease domain in the interval 165 to 255; it reads LKPEQLADYW…FNLQDIRYEK (91 aa). 4 residues coordinate K(+): Leu-176, Ala-177, Ile-187, and Val-190. The tract at residues 189–194 is interaction with DNA; that stretch reads GVGPKA.

It belongs to the Xni family. Mg(2+) serves as cofactor. K(+) is required as a cofactor.

Has flap endonuclease activity. During DNA replication, flap endonucleases cleave the 5'-overhanging flap structure that is generated by displacement synthesis when DNA polymerase encounters the 5'-end of a downstream Okazaki fragment. This chain is Flap endonuclease Xni, found in Aliivibrio fischeri (strain ATCC 700601 / ES114) (Vibrio fischeri).